We begin with the raw amino-acid sequence, 175 residues long: Small ribosomal subunit protein bS16 (175 aa).

Belongs to the bacterial ribosomal protein bS16 family.

This is Small ribosomal subunit protein bS16 from Cytophaga hutchinsonii (strain ATCC 33406 / DSM 1761 / CIP 103989 / NBRC 15051 / NCIMB 9469 / D465).